Consider the following 923-residue polypeptide: Hexokinase-3 (923 aa).

A compositionally biased stretch (polar residues) spans 1-18 (MDSIGSSGLRQGEETLSC). Residues 1-30 (MDSIGSSGLRQGEETLSCSEEGLPGPSDSS) are disordered. 2 Hexokinase domains span residues 27–471 (SDSS…MVTA) and 477–912 (AAHR…LVTA). The hexokinase small subdomain 1 stretch occupies residues 84–220 (HGTEQGDFVV…AYNIDVVAVV (137 aa)). An ATP-binding site is contributed by 95-102 (ELGATGAS). A D-glucose 6-phosphate-binding site is contributed by 95 to 104 (ELGATGASLR). D-glucose is bound by residues serine 168, 185 to 186 (TK), and 221 to 222 (ND). Residues 221–460 (NDTVGTMMGC…CDVSLIPSVD (240 aa)) form a hexokinase large subdomain 1 region. D-glucose 6-phosphate-binding residues include aspartate 222 and threonine 245. Residues asparagine 248, glutamate 273, and 304–307 (QRFE) contribute to the D-glucose site. 426–428 (GGR) is a binding site for D-glucose 6-phosphate. Residues 438–439 (SV) and 542–547 (DLGGTN) each bind ATP. The tract at residues 531-661 (DGSERGDFLA…AVELNVVAIV (131 aa)) is hexokinase small subdomain 2. 542-546 (DLGGT) serves as a coordination point for D-glucose 6-phosphate. D-glucose is bound by residues 609-610 (SF), 626-627 (TK), and 662-663 (ND). The interval 662–901 (NDTVGTMMSC…CVVTFLQSED (240 aa)) is hexokinase large subdomain 2. Aspartate 663 and threonine 686 together coordinate D-glucose 6-phosphate. Threonine 686 serves as a coordination point for ATP. D-glucose is bound by residues 688–689 (TN), glutamate 714, and glutamate 748. Residues 753 to 754 (GM), 790 to 794 (TKFLS), and 869 to 873 (TLYKL) each bind ATP. D-glucose 6-phosphate is bound by residues 867–869 (DGT) and serine 903.

It belongs to the hexokinase family.

The catalysed reaction is a D-hexose + ATP = a D-hexose 6-phosphate + ADP + H(+). It catalyses the reaction D-fructose + ATP = D-fructose 6-phosphate + ADP + H(+). The enzyme catalyses D-glucose + ATP = D-glucose 6-phosphate + ADP + H(+). The protein operates within carbohydrate metabolism; hexose metabolism. It participates in carbohydrate degradation; glycolysis; D-glyceraldehyde 3-phosphate and glycerone phosphate from D-glucose: step 1/4. With respect to regulation, hexokinase is an allosteric enzyme inhibited by its product D-glucose 6-phosphate. Functionally, catalyzes the phosphorylation of hexose, such as D-glucose and D-fructose, to hexose 6-phosphate (D-glucose 6-phosphate and D-fructose 6-phosphate, respectively). Mediates the initial step of glycolysis by catalyzing phosphorylation of D-glucose to D-glucose 6-phosphate. The sequence is that of Hexokinase-3 from Homo sapiens (Human).